We begin with the raw amino-acid sequence, 69 residues long: Antimicrobial peptide ISAMP (69 aa).

An N-terminal signal peptide occupies residues 1-23 (MRAVAIFIVTLLVLECVYFVMSE).

As to expression, expressed in the fat body, hemocytes and salivary glands of partially-fed female ticks. Not expressed in the midgut.

Its subcellular location is the secreted. Has antimicrobial activity against B.cereus (MIC=5.8 ug/ml), B.subtilis (MIC=12.3 ug/ml), S.aureus (MIC=10.4 ug/ml), E.coli Edl 933 (MIC=3.2 ug/ml) and E.coli MG/655 (MIC=4.2 ug/ml). Non-hemolytic. This chain is Antimicrobial peptide ISAMP, found in Ixodes scapularis (Black-legged tick).